The primary structure comprises 1272 residues: CST complex subunit CTC1 (1272 aa).

The protein belongs to the CTC1 family. In terms of assembly, component of the CST complex, composed of CTC1, TEN1 and STN1. Interacts with POT1A.

Its subcellular location is the nucleus. The protein resides in the chromosome. It is found in the telomere. Functionally, component of the CST complex, a complex that binds to single-stranded DNA and is required to protect telomeres from DNA degradation. The CST complex binds single-stranded DNA with high affinity in a sequence-independent manner, while isolated subunits bind DNA with low affinity by themselves. Associates with enzymatically active telomerase. In Arabidopsis thaliana (Mouse-ear cress), this protein is CST complex subunit CTC1.